The following is a 602-amino-acid chain: MTHTNMTFSSFGLNSCIITALNDIGYVQPSPIQAACIPYLIKGKDVLGMAQTGSGKTAAFALPLLHNIKLDVRVPQILVLTPTRELAVQVAEAFSNFSKKLIGVHVLALYGGQRYDLQLKSLRKGPQIIVGTPGRLLDHLKRRTLSLSNLHSLVLDEADEMLRMGFIEDVETIMTEIPDRHQTALFSATMPEAIRRISRRFMKNPKEIRIQSNITTRPDIQQSYWMVYGKKTDALIRFLEAEDFSATIIFVRTKNATLEVSEVLERYGYNSAALNGDMNQSLREQTLEKLKDGRLDILIATDVAARGLDVDRISFVINYDIPMDSESYVHRIGRTGRAGRKGKALLFVENRERRLLRNIERAMNISISEVNLPKSDFLSKRRLEKFAQKVQIQLDSKDLHEYRGLLPKLQPNNNSLDIESLAAALLKMAQGERSLIVKPESIVRARHLKIKDTYRNNNYKSLNYVSRYNRDKNVDLYRIDVGRNDGVEVRHIVGAIANEGDISSRKIGNVRLFSNYSTIELPKGLSNTLPKTFIRTKILNKFINIKLLYNSNFKGNYNDIKDVKVYNSNKLRSKKMNNKKFVSSGVRKKIKTNISCNRRRSV.

The Q motif signature appears at 6 to 34 (MTFSSFGLNSCIITALNDIGYVQPSPIQA). In terms of domain architecture, Helicase ATP-binding spans 37–208 (IPYLIKGKDV…RRFMKNPKEI (172 aa)). 50–57 (AQTGSGKT) serves as a coordination point for ATP. A DEAD box motif is present at residues 156–159 (DEAD). The Helicase C-terminal domain occupies 231-378 (KTDALIRFLE…EVNLPKSDFL (148 aa)).

This sequence belongs to the DEAD box helicase family. DeaD/CsdA subfamily.

Its subcellular location is the cytoplasm. The catalysed reaction is ATP + H2O = ADP + phosphate + H(+). Functionally, DEAD-box RNA helicase involved in various cellular processes at low temperature, including ribosome biogenesis, mRNA degradation and translation initiation. This Buchnera aphidicola subsp. Baizongia pistaciae (strain Bp) protein is ATP-dependent RNA helicase DeaD.